Here is a 343-residue protein sequence, read N- to C-terminus: Methionine synthase (343 aa).

Residues His211, Cys213, Glu236, and Cys315 each coordinate Zn(2+).

The protein belongs to the archaeal MetE family. The cofactor is Zn(2+).

It functions in the pathway amino-acid biosynthesis; L-methionine biosynthesis via de novo pathway. Functionally, catalyzes the transfer of a methyl group to L-homocysteine resulting in methionine formation. The physiological methyl donor is unknown. The protein is Methionine synthase of Thermoplasma acidophilum (strain ATCC 25905 / DSM 1728 / JCM 9062 / NBRC 15155 / AMRC-C165).